We begin with the raw amino-acid sequence, 420 residues long: Type II methyltransferase M.HgiCI (420 aa).

The region spanning 2–417 (LKFIDLFAGI…LDLFKSADLA (416 aa)) is the SAM-dependent MTase C5-type domain. The active site involves cysteine 75.

Belongs to the class I-like SAM-binding methyltransferase superfamily. C5-methyltransferase family.

It catalyses the reaction a 2'-deoxycytidine in DNA + S-adenosyl-L-methionine = a 5-methyl-2'-deoxycytidine in DNA + S-adenosyl-L-homocysteine + H(+). Its function is as follows. A methylase that recognizes the double-stranded sequence 5'-GGYRCC-3', methylates C-5 on both strands, and protects the DNA from cleavage by the HgiCI endonuclease. The sequence is that of Type II methyltransferase M.HgiCI (hgiCIM) from Herpetosiphon aurantiacus (Herpetosiphon giganteus).